A 532-amino-acid chain; its full sequence is 56 kDa type-specific antigen (532 aa).

Residues 1–22 form the signal peptide; that stretch reads MKKIMLIASAMSALSLPFSASA. Residues 67 to 87 traverse the membrane as a helical segment; the sequence is TNGLPFGGTLAAGMTIAPGFR. The interval 401 to 428 is disordered; the sequence is QEEDAKNQGEGDCKQQQGTSEKSKKGKD. A compositionally biased stretch (basic and acidic residues) spans 403–413; the sequence is EDAKNQGEGDC. Residues 480–500 form a helical membrane-spanning segment; that stretch reads TGMVASGALGVAINAAEGVYV.

The protein resides in the cell membrane. Functionally, may be an adherent factor for rickettsial adsorption to the host-cell surface and a determinant of virulence of individual rickettsial strain. It is the major outer membrane protein. The polypeptide is 56 kDa type-specific antigen (Orientia tsutsugamushi (Rickettsia tsutsugamushi)).